The primary structure comprises 207 residues: MNKAGQEARGFFIVLSAASGTGKTSIRRIFLERCPEVQFSVSYTTRTARPGEVDGQDYFFVTETDFRERIDQGEFAEWEENYGRYYGTSGKVMTRVLEQGRDMILDIEPRGAKTLKKNYQGGIYVFVLPPSLAELKARLRKRGESEAEIRKRLDKVREEIAEARGYDYVIFNDSLEKAVERLQVIYQAEKSRASRMSKQIQGVLDSE.

A Guanylate kinase-like domain is found at 10-187 (GFFIVLSAAS…AVERLQVIYQ (178 aa)). Position 17 to 24 (17 to 24 (AASGTGKT)) interacts with ATP.

Belongs to the guanylate kinase family.

The protein resides in the cytoplasm. It catalyses the reaction GMP + ATP = GDP + ADP. Functionally, essential for recycling GMP and indirectly, cGMP. The protein is Guanylate kinase of Syntrophus aciditrophicus (strain SB).